Reading from the N-terminus, the 107-residue chain is C-X-C motif chemokine 2 (107 aa).

A signal peptide spans 1-34 (MARATLSAAPSNPRLLRVALLLLLLVAASRRAAG). 2 cysteine pairs are disulfide-bonded: Cys-43/Cys-69 and Cys-45/Cys-85.

The protein belongs to the intercrine alpha (chemokine CxC) family. The N-terminal processed form GRO-beta(5-73) is produced by proteolytic cleavage after secretion from bone marrow stromal cells.

The protein localises to the secreted. In terms of biological role, produced by activated monocytes and neutrophils and expressed at sites of inflammation. Hematoregulatory chemokine, which, in vitro, suppresses hematopoietic progenitor cell proliferation. GRO-beta(5-73) shows a highly enhanced hematopoietic activity. This chain is C-X-C motif chemokine 2 (CXCL2), found in Homo sapiens (Human).